The following is a 737-amino-acid chain: Oligopeptide transporter 3 (737 aa).

16 helical membrane passes run 45–65, 69–89, 117–137, 153–173, 215–235, 255–275, 289–309, 357–377, 418–438, 446–466, 478–498, 532–552, 604–624, 629–649, 650–670, and 681–701; these read AWFL…FFTY, PLTI…KFMA, VIIT…AYSI, FICG…WAGI, FLVA…LFPI, VGSG…AGIS, ILNV…VCYW, LYLS…FTAT, WWFY…SFVW, WWGM…IGVI, IIGQ…NLIF, AQLV…WWML, VWLF…SKIF, WIPL…PPAT, PTNI…VFNY, and VLSA…FFAL.

This sequence belongs to the oligopeptide OPT transporter (TC 2.A.67.1) family. Strong expression in flowers, leaves and roots. Preferentially expressed in the vascular tissues of seedlings and mature plants as well as in pollen and developing embryos.

It localises to the membrane. Functionally, may be involved in the translocation of tetra- and pentapeptides across the cellular membrane in an energy-dependent manner. Also acts as a metal transporter that could be a component of the copper transport machinery. Essential for early embryo development. The sequence is that of Oligopeptide transporter 3 (OPT3) from Arabidopsis thaliana (Mouse-ear cress).